Consider the following 380-residue polypeptide: Probable cytosolic iron-sulfur protein assembly protein 1 (380 aa).

WD repeat units follow at residues 10–49 (AHNDKAWSVSVHPTLPIIATASTDKSTKLYKLSTKQKFPL), 56–108 (THKR…VEYD), 135–175 (GHEN…EEFE), 182–221 (DHSQDVKNVSWHPSMNILASSSYDDTIRIYQQDIAGDEWS), 228–275 (GHEG…EEDK), 299–338 (VHKYPVYSVAWSSLTGKIASAGSDGKIVVYSEAEKGKWVI), and 346–380 (HGVHEINCVIWAQLDDENEILVSAGDDGYVNLWNV).

It belongs to the WD repeat CIA1 family. In terms of assembly, interacts with NAR1.

Its subcellular location is the cytoplasm. The protein resides in the nucleus. Functionally, essential component of the cytosolic iron-sulfur (Fe/S) protein assembly machinery. Required for the maturation of extramitochondrial Fe/S proteins. In Candida dubliniensis (strain CD36 / ATCC MYA-646 / CBS 7987 / NCPF 3949 / NRRL Y-17841) (Yeast), this protein is Probable cytosolic iron-sulfur protein assembly protein 1.